A 218-amino-acid polypeptide reads, in one-letter code: Small ribosomal subunit protein uS3 (218 aa).

One can recognise a KH type-2 domain in the interval 38-106 (IREFISKRLS…RVHINILEIK (69 aa)).

It belongs to the universal ribosomal protein uS3 family. In terms of assembly, part of the 30S ribosomal subunit. Forms a tight complex with proteins S10 and S14.

Its function is as follows. Binds the lower part of the 30S subunit head. Binds mRNA in the 70S ribosome, positioning it for translation. The chain is Small ribosomal subunit protein uS3 from Bacillus pumilus (strain SAFR-032).